A 202-amino-acid chain; its full sequence is Large ribosomal subunit protein bL25 (202 aa).

The protein belongs to the bacterial ribosomal protein bL25 family. CTC subfamily. As to quaternary structure, part of the 50S ribosomal subunit; part of the 5S rRNA/L5/L18/L25 subcomplex. Contacts the 5S rRNA. Binds to the 5S rRNA independently of L5 and L18.

This is one of the proteins that binds to the 5S RNA in the ribosome where it forms part of the central protuberance. This Chlorobium luteolum (strain DSM 273 / BCRC 81028 / 2530) (Pelodictyon luteolum) protein is Large ribosomal subunit protein bL25.